The sequence spans 138 residues: ATP synthase epsilon chain, chloroplastic (138 aa).

It belongs to the ATPase epsilon chain family. F-type ATPases have 2 components, CF(1) - the catalytic core - and CF(0) - the membrane proton channel. CF(1) has five subunits: alpha(3), beta(3), gamma(1), delta(1), epsilon(1). CF(0) has three main subunits: a, b and c.

The protein localises to the plastid. It is found in the chloroplast thylakoid membrane. Functionally, produces ATP from ADP in the presence of a proton gradient across the membrane. The polypeptide is ATP synthase epsilon chain, chloroplastic (Galdieria sulphuraria (Red alga)).